Consider the following 123-residue polypeptide: Large ribosomal subunit protein bL19 (123 aa).

Belongs to the bacterial ribosomal protein bL19 family.

This protein is located at the 30S-50S ribosomal subunit interface and may play a role in the structure and function of the aminoacyl-tRNA binding site. This chain is Large ribosomal subunit protein bL19, found in Ureaplasma parvum serovar 3 (strain ATCC 27815 / 27 / NCTC 11736).